Reading from the N-terminus, the 259-residue chain is MTATDRTPPPLKWLCLGNRDANDGFELFAHGIYARNGALVGSKLSLRERRQRVDLSAFLSGAPPLLAEAAVKHLLARLLCVHRHNTDLELLGKNFIPLHASSLGNAGVCERILASARQLQQHQVELCLLLAIDEQEPASAEYLTSLARLRDSGVRIALHPQRIDTDARQCFAEVDAGLCDYLGLDARLLAPGPLTRNLRQRKSIEYLNRLLVAQDIQMLCLNVDNEELHQQANALPFAFRHGRHYSEPFQAWPFSSPAC.

It localises to the cell inner membrane. Functionally, positive regulation of toxA gene transcription. This Pseudomonas aeruginosa (strain ATCC 15692 / DSM 22644 / CIP 104116 / JCM 14847 / LMG 12228 / 1C / PRS 101 / PAO1) protein is Exotoxin A regulatory protein (toxR).